The following is an 801-amino-acid chain: PR domain zinc finger protein 4 (801 aa).

One can recognise an SET domain in the interval 412–529 (KQLVLRQSIV…PENELLFYYS (118 aa)). A C2H2-type 1; atypical zinc finger spans residues 545–566 (HLCNCGKECNSYTEFKAHLTSH). C2H2-type zinc fingers lie at residues 618 to 640 (HKCDFCSKAFSDPSNLRTHLKIH), 646 to 668 (YRCTLCDKSFTQKAHLESHMVIH), 674 to 696 (LKCDYCDKLFMRRQDLKQHVLIH), and 702 to 724 (IKCPKCDKLFLRTNHLKKHLNSH). The C2H2-type 6; atypical zinc-finger motif lies at 730–752 (YVCEKCTKAYLTKYHLTRHLKTC). The disordered stretch occupies residues 751-782 (TCKGPTSSSSAPEEEEEDDSEEEDLADSVGTE). A compositionally biased stretch (acidic residues) spans 762-776 (PEEEEEDDSEEEDLA).

The protein belongs to the class V-like SAM-binding methyltransferase superfamily. In terms of tissue distribution, expressed in many tissues. Highly expressed in ovary, testis, pancreas, brain, heart and prostate.

The protein localises to the nucleus. May function as a transcription factor involved in cell differentiation. The sequence is that of PR domain zinc finger protein 4 (PRDM4) from Homo sapiens (Human).